A 491-amino-acid polypeptide reads, in one-letter code: COP9 signalosome complex subunit 1 (491 aa).

One can recognise a PCI domain in the interval 269 to 431 (CLLLASFDHC…KILYARDVDQ (163 aa)). The interval 465–491 (HVKSPPREGSQGELTPANSQSRMSTNM) is disordered. Residues Ser-468 and Ser-474 each carry the phosphoserine modification. Residues 476-491 (GELTPANSQSRMSTNM) show a composition bias toward polar residues. Thr-479 is subject to Phosphothreonine. A Phosphoserine modification is found at Ser-483.

Belongs to the CSN1 family. In terms of assembly, component of the CSN complex, composed of COPS1/GPS1, COPS2, COPS3, COPS4, COPS5, COPS6, COPS7 (COPS7A or COPS7B), COPS8 and COPS9 isoform 1. In the complex, it probably interacts directly with COPS2, COPS3, COPS4 and COPS5. Interacts directly with inositol kinase ITPK1. Interacts with CAPN8. Interacts with USP48. Interacts with ASB4; this interaction negatively regulates GPS1. As to expression, widely expressed.

It is found in the cytoplasm. Its subcellular location is the nucleus. Essential component of the COP9 signalosome complex (CSN), a complex involved in various cellular and developmental processes. The CSN complex is an essential regulator of the ubiquitin (Ubl) conjugation pathway by mediating the deneddylation of the cullin subunits of SCF-type E3 ligase complexes, leading to decrease the Ubl ligase activity of SCF-type complexes such as SCF, CSA or DDB2. The complex is also involved in phosphorylation of p53/TP53, c-jun/JUN, IkappaBalpha/NFKBIA, ITPK1 and IRF8/ICSBP, possibly via its association with CK2 and PKD kinases. CSN-dependent phosphorylation of TP53 and JUN promotes and protects degradation by the Ubl system, respectively. Suppresses G-protein- and mitogen-activated protein kinase-mediated signal transduction. This chain is COP9 signalosome complex subunit 1 (GPS1), found in Homo sapiens (Human).